Here is a 323-residue protein sequence, read N- to C-terminus: tRNA dimethylallyltransferase (323 aa).

12–19 lines the ATP pocket; that stretch reads GPTAAGKT. Position 14–19 (14–19) interacts with substrate; the sequence is TAAGKT. Interaction with substrate tRNA stretches follow at residues 37-40 and 161-165; these read DSAL and QRLSR.

Belongs to the IPP transferase family. Monomer. Requires Mg(2+) as cofactor.

The enzyme catalyses adenosine(37) in tRNA + dimethylallyl diphosphate = N(6)-dimethylallyladenosine(37) in tRNA + diphosphate. Functionally, catalyzes the transfer of a dimethylallyl group onto the adenine at position 37 in tRNAs that read codons beginning with uridine, leading to the formation of N6-(dimethylallyl)adenosine (i(6)A). The protein is tRNA dimethylallyltransferase of Pseudomonas fluorescens (strain SBW25).